The following is a 201-amino-acid chain: Single-stranded DNA-binding protein DdrA (201 aa).

It belongs to the RAD52 family. The truncated form (1-160) of DdrA forms heptameric rings that can assemble into a 3-ring structure.

Functionally, ssDNA-binding protein that contributes to the ionizing radiation resistance of D.deserti. Plays a role in DNA repair and genome reconstitution, in a RecA-independent process, since DdrA is essential for recovery from severe genomic fragmentation as a result of exposure to severe levels of ionizing radiation in an environment lacking nutrients. In vitro, binds to the 3'-ends of single-stranded DNA, and probably protects them from nuclease degradation. Thus, DdrA is part of a DNA end-protection system that helps to preserve genome integrity following irradiation or desiccation. The protein is Single-stranded DNA-binding protein DdrA (ddrA) of Deinococcus deserti (strain DSM 17065 / CIP 109153 / LMG 22923 / VCD115).